We begin with the raw amino-acid sequence, 532 residues long: 2,3-bisphosphoglycerate-independent phosphoglycerate mutase (532 aa).

Positions 15 and 65 each coordinate Mn(2+). Residue Ser-65 is the Phosphoserine intermediate of the active site. Residues His-126, 156-157, Arg-188, Arg-194, 258-261, and Lys-331 contribute to the substrate site; these read RD and RPDR. Positions 398, 402, 439, 440, and 457 each coordinate Mn(2+).

It belongs to the BPG-independent phosphoglycerate mutase family. In terms of assembly, monomer. Requires Mn(2+) as cofactor.

The catalysed reaction is (2R)-2-phosphoglycerate = (2R)-3-phosphoglycerate. It participates in carbohydrate degradation; glycolysis; pyruvate from D-glyceraldehyde 3-phosphate: step 3/5. In terms of biological role, catalyzes the interconversion of 2-phosphoglycerate and 3-phosphoglycerate. The sequence is that of 2,3-bisphosphoglycerate-independent phosphoglycerate mutase from Synechococcus elongatus (strain ATCC 33912 / PCC 7942 / FACHB-805) (Anacystis nidulans R2).